A 397-amino-acid polypeptide reads, in one-letter code: Teichoic acid D-alanine hydrolase (397 aa).

A signal peptide spans 1-27 (MKFNKEKLVIHACVLLFIIISIGLVFH).

It is found in the cell membrane. The catalysed reaction is [(4-D-Ala)-(2-GlcNAc)-Rib-ol-P]n-[Gro-P]m-beta-D-ManNAc-(1-&gt;4)-alpha-D-GlcNAc-P-peptidoglycan + n H2O = [(2-GlcNAc)-Rib-ol-P]n-[Gro-P]m-beta-D-ManNAc-(1-&gt;4)-alpha-D-GlcNAc-P-peptidoglycan + n D-alanine.. Its function is as follows. Catalyzes the liberation of D-alanyl moieties present on wall teichoic acid (WTA) and lipoteichoic acid (LTA). Affects the methicillin resistance level and autolysis in the presence of Triton X-100 as well as the cell wall structure. This Staphylococcus aureus (strain MRSA252) protein is Teichoic acid D-alanine hydrolase (fmtA).